Here is a 953-residue protein sequence, read N- to C-terminus: Probable isoleucine--tRNA ligase, cytoplasmic (953 aa).

A 'HIGH' region motif is present at residues 45 to 55; it reads PFATGLPHYGH. Residues 634–638 carry the 'KMSKS' region motif; the sequence is KMSKR. Lys637 contributes to the ATP binding site.

This sequence belongs to the class-I aminoacyl-tRNA synthetase family.

Its subcellular location is the cytoplasm. The catalysed reaction is tRNA(Ile) + L-isoleucine + ATP = L-isoleucyl-tRNA(Ile) + AMP + diphosphate. The polypeptide is Probable isoleucine--tRNA ligase, cytoplasmic (Enterocytozoon bieneusi (strain H348) (Microsporidian parasite)).